A 264-amino-acid chain; its full sequence is MHFAALAILSSLVASAAAHTRVWGVWVNGVDQGDGRDIYIRSPPTNDPVVNLTDPAMACNVDNRVVPQWVSVKSNDSLTFEWYHNTRDDDIIASSHHGPIAVYVAPAASNGSGPVWVKIFDDTYTTSWAVDRLITAHGQHTVIVPDIPAGDYLFRAEINALHQADVLYDQDPLRGAQFYISCAQITITPGGDETLPAGIALPGAYTDSTPGIVWNLYNGSDPTEYVAPGPPVWTDALGGSIALVGIPVLPNTTSSAGVAPTGAA.

Residues 1–18 (MHFAALAILSSLVASAAA) form the signal peptide. His-19 serves as a coordination point for Cu(2+). Residues Asn-51 and Asn-75 are each glycosylated (N-linked (GlcNAc...) asparagine). Cys-59 and Cys-182 are disulfide-bonded. His-96 is a binding site for Cu(2+). Asn-110 carries an N-linked (GlcNAc...) asparagine glycan. His-162 is a binding site for O2. Tyr-179 is a Cu(2+) binding site. N-linked (GlcNAc...) asparagine glycans are attached at residues Asn-218 and Asn-251.

Belongs to the polysaccharide monooxygenase AA9 family. Cu(2+) is required as a cofactor.

It is found in the secreted. It catalyses the reaction [(1-&gt;4)-beta-D-glucosyl]n+m + reduced acceptor + O2 = 4-dehydro-beta-D-glucosyl-[(1-&gt;4)-beta-D-glucosyl]n-1 + [(1-&gt;4)-beta-D-glucosyl]m + acceptor + H2O.. In terms of biological role, lytic polysaccharide monooxygenase (LPMO) that depolymerizes crystalline and amorphous polysaccharides via the oxidation of scissile alpha- or beta-(1-4)-glycosidic bonds, yielding C4 oxidation products. Catalysis by LPMOs requires the reduction of the active-site copper from Cu(II) to Cu(I) by a reducing agent and H(2)O(2) or O(2) as a cosubstrate. Active on cellulose and cello-oligosaccharides, as well as plant cell wall-derived hemicellulosic polysaccharides. Also active on cello-oligosaccharides such as cellohexaose, cellopentaose or cellotetraose. In Phanerochaete carnosa (strain HHB-10118-sp) (White-rot fungus), this protein is AA9 family lytic polysaccharide monooxygenase A.